Consider the following 582-residue polypeptide: Putative transcriptional regulator HVO_1357 (582 aa).

The Response regulatory domain occupies 19-129; that stretch reads VVLVVDDDED…EVKETVEELL (111 aa). 4-aspartylphosphate is present on aspartate 67. A coiled-coil region spans residues 165 to 203; it reads LSDLRSRLEAVRAEHEAAIRNREAQLDRLNRTNELLRDV. Residues 517–569 form the HTH bat-type domain; sequence LTDRQRTVLETSLVSGYFEWPRGSTAEEVADSLGISPPTLHEHLRTAERKLIE.

Its function is as follows. May be part of a signal-dependent gene regulation cascade that is relevant to swimming motility. May be involved in the transcription regulation of target genes. This chain is Putative transcriptional regulator HVO_1357, found in Haloferax volcanii (strain ATCC 29605 / DSM 3757 / JCM 8879 / NBRC 14742 / NCIMB 2012 / VKM B-1768 / DS2) (Halobacterium volcanii).